A 304-amino-acid chain; its full sequence is Light-independent protochlorophyllide reductase iron-sulfur ATP-binding protein (304 aa).

ATP is bound by residues 46–51 and Lys75; that span reads GIGKST. Ser50 provides a ligand contact to Mg(2+). Cys131 and Cys165 together coordinate [4Fe-4S] cluster. ATP is bound by residues 216–217 and 240–242; these read NR and PDL.

The protein belongs to the NifH/BchL/ChlL family. Homodimer. Protochlorophyllide reductase is composed of three subunits; BchL, BchN and BchB. The cofactor is [4Fe-4S] cluster.

It carries out the reaction chlorophyllide a + oxidized 2[4Fe-4S]-[ferredoxin] + 2 ADP + 2 phosphate = protochlorophyllide a + reduced 2[4Fe-4S]-[ferredoxin] + 2 ATP + 2 H2O. It functions in the pathway porphyrin-containing compound metabolism; bacteriochlorophyll biosynthesis (light-independent). Component of the dark-operative protochlorophyllide reductase (DPOR) that uses Mg-ATP and reduced ferredoxin to reduce ring D of protochlorophyllide (Pchlide) to form chlorophyllide a (Chlide). This reaction is light-independent. The L component serves as a unique electron donor to the NB-component of the complex, and binds Mg-ATP. The sequence is that of Light-independent protochlorophyllide reductase iron-sulfur ATP-binding protein from Rhodobacter capsulatus (strain ATCC BAA-309 / NBRC 16581 / SB1003).